The sequence spans 1685 residues: Phosphatidylinositol 4-phosphate 3-kinase C2 domain-containing subunit alpha (1685 aa).

2 disordered regions span residues 1–33 and 41–60; these read MAQI…EALQ and KLQK…LSSS. Ala2 is modified (N-acetylalanine). The interval 2–142 is interaction with clathrin; sufficient to induce clathrin assembly; sequence AQISSNSGFK…FRPTIQRGQW (141 aa). Residues 19 to 31 show a composition bias toward basic and acidic residues; that stretch reads EPTRAKDVDKEEA. The segment covering 49 to 60 has biased composition (polar residues); that stretch reads TDNQRGFELSSS. A phosphoserine mark is found at Ser60, Ser108, Ser259, Ser327, and Ser338. The 89-residue stretch at 419-507 folds into the PI3K-RBD domain; that stretch reads NASVKVSIDI…DTEIRLQLLT (89 aa). Ser628 is subject to Phosphoserine. Positions 680-839 constitute a C2 PI3K-type domain; that stretch reads TTEQLQFTIF…ERIVLQVDFP (160 aa). Positions 859–1035 constitute a PIK helical domain; that stretch reads QHNLETLEND…EHVLGALLSV (177 aa). In terms of domain architecture, PI3K/PI4K catalytic spans 1103-1381; the sequence is SIKSCSFFSS…LIESSLGSIA (279 aa). The G-loop stretch occupies residues 1109 to 1115; it reads FFSSNAV. The tract at residues 1245–1253 is catalytic loop; sequence GICDRHNDN. Positions 1264–1290 are activation loop; the sequence is HIDFGKFLGHAQMFGTFKRDRAPFVLT. In terms of domain architecture, PX spans 1420 to 1536; that stretch reads GRIKEVSVFT…TFFHPLLRDE (117 aa). The interaction with PtdIns(4,5)P2-containing membranes stretch occupies residues 1486–1491; that stretch reads RMVLGR. Ser1551 carries the post-translational modification Phosphoserine. A C2 domain is found at 1554 to 1677; sequence TPGQIGGAVK…NLSKETVKWY (124 aa). A Nuclear localization signal motif is present at residues 1607–1618; the sequence is SKRKTKISRKTR.

This sequence belongs to the PI3/PI4-kinase family. As to quaternary structure, part of a complex with ERBB2 and EGFR. Interacts with clathrin trimers. Interacts with SBF2/MTMR13. Ca(2+) serves as cofactor. The cofactor is Mg(2+). Phosphorylated on Ser-259 during mitosis and upon UV irradiation; which does not change enzymatic activity but leads to proteasomal degradation. Phosphorylated upon insulin stimulation; which may lead to enzyme activation.

The protein resides in the cell membrane. Its subcellular location is the cytoplasmic vesicle. The protein localises to the clathrin-coated vesicle. It is found in the nucleus. It localises to the cytoplasm. The protein resides in the golgi apparatus. Its subcellular location is the trans-Golgi network. It catalyses the reaction a 1,2-diacyl-sn-glycero-3-phospho-(1D-myo-inositol 4-phosphate) + ATP = a 1,2-diacyl-sn-glycero-3-phospho-(1D-myo-inositol-3,4-bisphosphate) + ADP + H(+). It carries out the reaction a 1,2-diacyl-sn-glycero-3-phospho-(1D-myo-inositol) + ATP = a 1,2-diacyl-sn-glycero-3-phospho-(1D-myo-inositol-3-phosphate) + ADP + H(+). The catalysed reaction is a 1,2-diacyl-sn-glycero-3-phospho-(1D-myo-inositol-4,5-bisphosphate) + ATP = a 1,2-diacyl-sn-glycero-3-phospho-(1D-myo-inositol-3,4,5-trisphosphate) + ADP + H(+). Only slightly inhibited by wortmannin and LY294002. Activated by clathrin and insulin. Generates phosphatidylinositol 3-phosphate (PtdIns3P) and phosphatidylinositol 3,4-bisphosphate (PtdIns(3,4)P2) that act as second messengers. Has a role in several intracellular trafficking events. Functions in insulin signaling and secretion. Required for translocation of the glucose transporter SLC2A4/GLUT4 to the plasma membrane and glucose uptake in response to insulin-mediated RHOQ activation. Regulates insulin secretion through two different mechanisms: involved in glucose-induced insulin secretion downstream of insulin receptor in a pathway that involves AKT1 activation and TBC1D4/AS160 phosphorylation, and participates in the late step of insulin granule exocytosis probably in insulin granule fusion. Synthesizes PtdIns3P in response to insulin signaling. Functions in clathrin-coated endocytic vesicle formation and distribution. Regulates dynamin-independent endocytosis, probably by recruiting EEA1 to internalizing vesicles. In neurosecretory cells synthesizes PtdIns3P on large dense core vesicles. Participates in calcium induced contraction of vascular smooth muscle by regulating myosin light chain (MLC) phosphorylation through a mechanism involving Rho kinase-dependent phosphorylation of the MLCP-regulatory subunit MYPT1. May play a role in the EGF signaling cascade. May be involved in mitosis and UV-induced damage response. Required for maintenance of normal renal structure and function by supporting normal podocyte function. Involved in the regulation of ciliogenesis and trafficking of ciliary components. In Pongo abelii (Sumatran orangutan), this protein is Phosphatidylinositol 4-phosphate 3-kinase C2 domain-containing subunit alpha (PIK3C2A).